We begin with the raw amino-acid sequence, 290 residues long: Phosphatidylglycerol--prolipoprotein diacylglyceryl transferase (290 aa).

7 helical membrane passes run 21-41, 60-80, 96-116, 124-144, 199-219, 226-246, and 259-279; these read VSLH…MWLA, LLYA…VLFY, WDGG…MLWF, FFQV…AGRL, SQLY…NLFI, GSVS…VECF, and VISM…IMMI. Arg-143 provides a ligand contact to a 1,2-diacyl-sn-glycero-3-phospho-(1'-sn-glycerol).

The protein belongs to the Lgt family.

Its subcellular location is the cell inner membrane. The enzyme catalyses L-cysteinyl-[prolipoprotein] + a 1,2-diacyl-sn-glycero-3-phospho-(1'-sn-glycerol) = an S-1,2-diacyl-sn-glyceryl-L-cysteinyl-[prolipoprotein] + sn-glycerol 1-phosphate + H(+). Its pathway is protein modification; lipoprotein biosynthesis (diacylglyceryl transfer). Catalyzes the transfer of the diacylglyceryl group from phosphatidylglycerol to the sulfhydryl group of the N-terminal cysteine of a prolipoprotein, the first step in the formation of mature lipoproteins. The sequence is that of Phosphatidylglycerol--prolipoprotein diacylglyceryl transferase from Yersinia enterocolitica serotype O:8 / biotype 1B (strain NCTC 13174 / 8081).